The primary structure comprises 468 residues: MTKTLPKDFIFGGATAAYQAEGATHTDGKGPVAWDKYLEDNYWYTAEPASDFYNRYPVDLKLSEEFGVNGIRISIAWSRIFPTGKGEVNPKGVEYYHNLFAECHKRHVEPFVTLHHFDTPEALHSDGDFLNRENIEHFVNYAEFCFKEFSEVNYWTTFNEIGPIGDGQYLVGKFPPGIQYDLAKVFQSHHNMMVSHARAVKLFKDSGYSGEIGVVHALPTKYPFDANNPDDVRAAELEDIIHNKFILDATYLGKYSDKTMEGVNHILEVNGGELDLREEDFAALDAAKDLNDFLGINYYMSDWMQAFDGETEIIHNGKGEKGSSKYQIKGVGRRKAPVDVPKTDWDWIIFPQGLYDQIMRVKADYPNYKKIYITENGLGYKDEFVDNTVYDGGRIDYVKKHLEVISDAISDGANVKGYFMWSLMDVFSWSNGYEKRYGLFYVDFETQERYPKKSAYWYKKVAETQVIE.

D-galactose 6-phosphate is bound by residues Gln19, His116, Asn159, Glu160, and Asn297. Catalysis depends on Glu160, which acts as the Proton donor. The active-site Nucleophile is Glu375. Residues Ser428, Trp429, Lys435, and Tyr437 each contribute to the D-galactose 6-phosphate site.

The protein belongs to the glycosyl hydrolase 1 family.

It catalyses the reaction a 6-phospho-beta-D-galactoside + H2O = D-galactose 6-phosphate + an alcohol. It participates in carbohydrate metabolism; lactose degradation; D-galactose 6-phosphate and beta-D-glucose from lactose 6-phosphate: step 1/1. This chain is 6-phospho-beta-galactosidase, found in Streptococcus pyogenes serotype M1.